Consider the following 296-residue polypeptide: Cyclin-dependent kinase 1 (296 aa).

The Protein kinase domain occupies Tyr-10–Phe-288. ATP contacts are provided by residues Leu-16 to Val-24 and Lys-39. Thr-20 is modified (phosphothreonine). Tyr-21 is subject to Phosphotyrosine. Asp-129 serves as the catalytic Proton acceptor. Residue Thr-162 is modified to Phosphothreonine; by CAK.

This sequence belongs to the protein kinase superfamily. CMGC Ser/Thr protein kinase family. CDC2/CDKX subfamily. In terms of assembly, forms a stable but non-covalent complex with a regulatory subunit and with a cyclin.

It carries out the reaction L-seryl-[protein] + ATP = O-phospho-L-seryl-[protein] + ADP + H(+). The catalysed reaction is L-threonyl-[protein] + ATP = O-phospho-L-threonyl-[protein] + ADP + H(+). It catalyses the reaction [DNA-directed RNA polymerase] + ATP = phospho-[DNA-directed RNA polymerase] + ADP + H(+). Its activity is regulated as follows. Phosphorylation at Thr-20 or Tyr-21 inactivates the enzyme, while phosphorylation at Thr-162 activates it. Plays a key role in the control of the eukaryotic cell cycle. Required for entry into S-phase and mitosis. p34 is a component of the kinase complex that phosphorylates the repetitive C-terminus of RNA polymerase II. In Dictyostelium discoideum (Social amoeba), this protein is Cyclin-dependent kinase 1 (cdk1).